Reading from the N-terminus, the 122-residue chain is Large ribosomal subunit protein uL14 (122 aa).

This sequence belongs to the universal ribosomal protein uL14 family. Part of the 50S ribosomal subunit. Forms a cluster with proteins L3 and L19. In the 70S ribosome, L14 and L19 interact and together make contacts with the 16S rRNA in bridges B5 and B8.

Binds to 23S rRNA. Forms part of two intersubunit bridges in the 70S ribosome. The chain is Large ribosomal subunit protein uL14 from Campylobacter lari (strain RM2100 / D67 / ATCC BAA-1060).